Reading from the N-terminus, the 253-residue chain is Aminoglycoside nucleotidyltransferase (4') (253 aa).

In terms of assembly, homodimer.

The enzyme catalyses kanamycin A + ATP = 4'-adenylylkanamycin A + diphosphate. The catalysed reaction is amikacin + ATP = 4'-adenylylamikacin + diphosphate. It catalyses the reaction neomycin B + ATP = 4'-adenylylneomycin B + diphosphate. It carries out the reaction paromomycin + ATP = 4'-adenylylparomomycin + diphosphate. The enzyme catalyses ribostamycin + ATP = 4'-adenylylribostamycin + diphosphate. The catalysed reaction is tobramycin + ATP = 4'-adenylyltobramycin + diphosphate. It catalyses the reaction kanamycin A + CTP = 4'-cytidylylkanamycin A + diphosphate. It carries out the reaction kanamycin A + GTP = 4'-guanylylkanamycin A + diphosphate. The enzyme catalyses kanamycin A + ITP = 4'-inosinylylkanamycin A + diphosphate. The catalysed reaction is dTTP + kanamycin A = 4'-thymidylylkanamycin A + diphosphate. It catalyses the reaction kanamycin A + UTP = 4'-uridylylkanamycin A + diphosphate. It carries out the reaction kanamycin A + dATP = 4'-(2'-deoxyadenylyl)kanamycin A + diphosphate. The enzyme catalyses kanamycin A + dCTP = 4'-(2'-deoxycytidylyl)kanamycin A + diphosphate. The catalysed reaction is kanamycin A + dGTP = 4'-(2'-deoxyguanylyl)kanamycin A + diphosphate. It catalyses the reaction dUTP + kanamycin A = 4'-(2'-deoxyuridylyl)kanamycin A + diphosphate. It carries out the reaction amikacin + GTP = 4'-guanylylamikacin + diphosphate. The enzyme catalyses amikacin + ITP = 4'-inosinylylamikacin + diphosphate. The catalysed reaction is amikacin + CTP = 4'-cytidylylamikacin + diphosphate. It catalyses the reaction amikacin + UTP = 4'-uridylylamikacin + diphosphate. It carries out the reaction amikacin + dTTP = 4'-thymidylylamikacin + diphosphate. In terms of biological role, inactivates aminoglycoside antibiotics such as kanamycin by catalyzing the transfer of a nucleotidyl group from nucleoside triphosphates such as (d)ATP to the 4'-hydroxyl group of the aminoglycoside. This Bacillus sp protein is Aminoglycoside nucleotidyltransferase (4').